A 241-amino-acid chain; its full sequence is Large ribosomal subunit protein uL3 (241 aa).

2 disordered regions span residues 139-166 (VSHRSIGSTGGRQDPGKTFKNKKMPGHM) and 214-241 (ADAPKPGKFRLANGDAAAEAPAAEQEGA). N5-methylglutamine is present on Gln151. The segment covering 229–241 (AAAEAPAAEQEGA) has biased composition (low complexity).

Part of the 50S ribosomal subunit. Forms a cluster with proteins L14 and L19. Methylated, on either Lys-155 or Lys-158. In terms of processing, methylated by PrmB.

Its function is as follows. One of the primary rRNA binding proteins, it binds directly near the 3'-end of the 23S rRNA, where it nucleates assembly of the 50S subunit. This Rhodopseudomonas palustris (strain ATCC BAA-98 / CGA009) protein is Large ribosomal subunit protein uL3.